We begin with the raw amino-acid sequence, 525 residues long: Nucleolar complex protein 4 homolog B (525 aa).

A compositionally biased stretch (basic residues) spans 1–10 (MAARKAKHAF). A disordered region spans residues 1 to 21 (MAARKAKHAFRSQATQSDAER). Transmembrane regions (helical) follow at residues 307–327 (AAYD…FILI), 358–378 (FFHL…LVAA), and 386–406 (LALT…CNLI).

It belongs to the CBF/MAK21 family.

Its subcellular location is the nucleus membrane. The protein localises to the nucleus. It localises to the nucleolus. This chain is Nucleolar complex protein 4 homolog B (noc4l-b), found in Xenopus laevis (African clawed frog).